Here is a 209-residue protein sequence, read N- to C-terminus: Orotate phosphoribosyltransferase (209 aa).

5-phospho-alpha-D-ribose 1-diphosphate is bound by residues Arg96, Lys100, His102, and 122–130 (EDLISTGGS). Orotate is bound at residue Ser126.

It belongs to the purine/pyrimidine phosphoribosyltransferase family. PyrE subfamily. In terms of assembly, homodimer. It depends on Mg(2+) as a cofactor.

It carries out the reaction orotidine 5'-phosphate + diphosphate = orotate + 5-phospho-alpha-D-ribose 1-diphosphate. It functions in the pathway pyrimidine metabolism; UMP biosynthesis via de novo pathway; UMP from orotate: step 1/2. Catalyzes the transfer of a ribosyl phosphate group from 5-phosphoribose 1-diphosphate to orotate, leading to the formation of orotidine monophosphate (OMP). This Lactococcus lactis subsp. cremoris (strain MG1363) protein is Orotate phosphoribosyltransferase.